A 95-amino-acid polypeptide reads, in one-letter code: Bombyxin F-1 (95 aa).

Residues 1–19 form the signal peptide; sequence MKLVVIVLLVISVSILVSA. Disulfide bonds link Cys-29/Cys-82, Cys-41/Cys-95, and Cys-81/Cys-86. Positions 53-71 are cleaved as a propeptide — c peptide like; sequence NSDMVYEDSGMPELLPADT.

The protein belongs to the insulin family. As to quaternary structure, heterodimer of a B chain and an A chain linked by two disulfide bonds.

The protein localises to the secreted. The chain is Bombyxin F-1 (BBXF1) from Bombyx mori (Silk moth).